Consider the following 71-residue polypeptide: Small ribosomal subunit protein bS21 (71 aa).

Positions 39 to 71 (EKPTTVRKRAKAAAQKRHAKKLARENARRVRLY) are disordered. Residues 43–59 (TVRKRAKAAAQKRHAKK) are compositionally biased toward basic residues. The segment covering 60–71 (LARENARRVRLY) has biased composition (basic and acidic residues).

The protein belongs to the bacterial ribosomal protein bS21 family.

This Vibrio atlanticus (strain LGP32) (Vibrio splendidus (strain Mel32)) protein is Small ribosomal subunit protein bS21.